A 283-amino-acid chain; its full sequence is Bifunctional protein FolD (283 aa).

NADP(+) is bound at residue 166-168 (GAS).

The protein belongs to the tetrahydrofolate dehydrogenase/cyclohydrolase family. As to quaternary structure, homodimer.

It catalyses the reaction (6R)-5,10-methylene-5,6,7,8-tetrahydrofolate + NADP(+) = (6R)-5,10-methenyltetrahydrofolate + NADPH. The catalysed reaction is (6R)-5,10-methenyltetrahydrofolate + H2O = (6R)-10-formyltetrahydrofolate + H(+). Its pathway is one-carbon metabolism; tetrahydrofolate interconversion. Catalyzes the oxidation of 5,10-methylenetetrahydrofolate to 5,10-methenyltetrahydrofolate and then the hydrolysis of 5,10-methenyltetrahydrofolate to 10-formyltetrahydrofolate. In Coxiella burnetii (strain CbuG_Q212) (Coxiella burnetii (strain Q212)), this protein is Bifunctional protein FolD.